A 242-amino-acid chain; its full sequence is Adapter protein MecA (242 aa).

Belongs to the MecA family. As to quaternary structure, homodimer.

Its function is as follows. Enables the recognition and targeting of unfolded and aggregated proteins to the ClpC protease or to other proteins involved in proteolysis. This Streptococcus gordonii (strain Challis / ATCC 35105 / BCRC 15272 / CH1 / DL1 / V288) protein is Adapter protein MecA.